A 378-amino-acid polypeptide reads, in one-letter code: Ribosomal RNA large subunit methyltransferase G (378 aa).

This sequence belongs to the methyltransferase superfamily. RlmG family.

It localises to the cytoplasm. It carries out the reaction guanosine(1835) in 23S rRNA + S-adenosyl-L-methionine = N(2)-methylguanosine(1835) in 23S rRNA + S-adenosyl-L-homocysteine + H(+). Its function is as follows. Specifically methylates the guanine in position 1835 (m2G1835) of 23S rRNA. The protein is Ribosomal RNA large subunit methyltransferase G of Shigella boydii serotype 18 (strain CDC 3083-94 / BS512).